Here is a 141-residue protein sequence, read N- to C-terminus: Nucleoside diphosphate kinase (141 aa).

ATP-binding residues include lysine 11, phenylalanine 59, arginine 87, threonine 93, arginine 104, and asparagine 114. The Pros-phosphohistidine intermediate role is filled by histidine 117.

This sequence belongs to the NDK family. As to quaternary structure, homotetramer. Mg(2+) is required as a cofactor.

The protein localises to the cytoplasm. The catalysed reaction is a 2'-deoxyribonucleoside 5'-diphosphate + ATP = a 2'-deoxyribonucleoside 5'-triphosphate + ADP. The enzyme catalyses a ribonucleoside 5'-diphosphate + ATP = a ribonucleoside 5'-triphosphate + ADP. Major role in the synthesis of nucleoside triphosphates other than ATP. The ATP gamma phosphate is transferred to the NDP beta phosphate via a ping-pong mechanism, using a phosphorylated active-site intermediate. This chain is Nucleoside diphosphate kinase, found in Bordetella petrii (strain ATCC BAA-461 / DSM 12804 / CCUG 43448).